The primary structure comprises 69 residues: Large ribosomal subunit protein bL31 (69 aa).

The protein belongs to the bacterial ribosomal protein bL31 family. Type A subfamily. Part of the 50S ribosomal subunit.

Functionally, binds the 23S rRNA. This chain is Large ribosomal subunit protein bL31, found in Magnetococcus marinus (strain ATCC BAA-1437 / JCM 17883 / MC-1).